We begin with the raw amino-acid sequence, 267 residues long: PF03932 family protein CutC (267 aa).

It belongs to the CutC family.

The protein resides in the cytoplasm. This chain is PF03932 family protein CutC, found in Xylella fastidiosa (strain Temecula1 / ATCC 700964).